The chain runs to 81 residues: Short neurotoxin 2 (81 aa).

The signal sequence occupies residues 1–21 (MKTLLLTLVVVTIVCLDLGYT). Intrachain disulfides connect Cys-24-Cys-43, Cys-38-Cys-60, Cys-62-Cys-73, and Cys-74-Cys-79.

This sequence belongs to the three-finger toxin family. Short-chain subfamily. Type I alpha-neurotoxin sub-subfamily. As to expression, expressed by the venom gland.

The protein localises to the secreted. Its function is as follows. Binds to muscle nicotinic acetylcholine receptor (nAChR) and inhibit acetylcholine from binding to the receptor, thereby impairing neuromuscular transmission. The polypeptide is Short neurotoxin 2 (Hydrophis hardwickii (Hardwick's spine-bellied seasnake)).